The chain runs to 382 residues: Lipoyl synthase, mitochondrial (382 aa).

The transit peptide at 1 to 30 (MHGRRHLAASLARALTYAPSRSISSTPSLL) directs the protein to the mitochondrion. A compositionally biased stretch (polar residues) spans 25 to 34 (STPSLLQTLD). A disordered region spans residues 25-47 (STPSLLQTLDPSTPSPAAAPPTA). 7 residues coordinate [4Fe-4S] cluster: cysteine 112, cysteine 117, cysteine 123, cysteine 143, cysteine 147, cysteine 150, and serine 359. The Radical SAM core domain maps to 128–348 (ETGTATATIM…RSLGVDMGFR (221 aa)).

It belongs to the radical SAM superfamily. Lipoyl synthase family. The cofactor is [4Fe-4S] cluster.

The protein localises to the mitochondrion. It carries out the reaction [[Fe-S] cluster scaffold protein carrying a second [4Fe-4S](2+) cluster] + N(6)-octanoyl-L-lysyl-[protein] + 2 oxidized [2Fe-2S]-[ferredoxin] + 2 S-adenosyl-L-methionine + 4 H(+) = [[Fe-S] cluster scaffold protein] + N(6)-[(R)-dihydrolipoyl]-L-lysyl-[protein] + 4 Fe(3+) + 2 hydrogen sulfide + 2 5'-deoxyadenosine + 2 L-methionine + 2 reduced [2Fe-2S]-[ferredoxin]. The protein operates within protein modification; protein lipoylation via endogenous pathway; protein N(6)-(lipoyl)lysine from octanoyl-[acyl-carrier-protein]: step 2/2. In terms of biological role, catalyzes the radical-mediated insertion of two sulfur atoms into the C-6 and C-8 positions of the octanoyl moiety bound to the lipoyl domains of lipoate-dependent enzymes, thereby converting the octanoylated domains into lipoylated derivatives. The chain is Lipoyl synthase, mitochondrial from Oryza sativa subsp. indica (Rice).